A 576-amino-acid polypeptide reads, in one-letter code: Ecdysone receptor (576 aa).

The interval Met1–Leu162 is modulating. Residues Cys87–Pro154 are disordered. Over residues Gln91 to Leu106 the composition is skewed to low complexity. A compositionally biased stretch (pro residues) spans Pro107–Thr117. NR C4-type zinc fingers lie at residues Cys163 to Cys183 and Cys199 to Cys223. Positions Cys163–Pro235 form a DNA-binding region, nuclear receptor. The interval Glu245–Ile269 is disordered. The 235-residue stretch at Asn314–Asp548 folds into the NR LBD domain.

It belongs to the nuclear hormone receptor family. NR1 subfamily.

The protein localises to the nucleus. Its function is as follows. Receptor for ecdysone. Binds to ecdysone response elements (ECRES). The chain is Ecdysone receptor (EcR) from Heliothis virescens (Tobacco budworm moth).